Consider the following 367-residue polypeptide: AA9 family lytic polysaccharide monooxygenase A (367 aa).

Residues 1–20 form the signal peptide; the sequence is MKSSTFGMLALAAAAKLVSA. Residue H21 coordinates Cu(2+). The interval 37–56 is disordered; sequence GNSESGYIRSPPSNSPITDV. The cysteines at positions 63 and 183 are disulfide-linked. Position 102 (H102) interacts with Cu(2+). Position 169 (H169) interacts with O2. Y180 lines the Cu(2+) pocket. Residues 234-287 are disordered; sequence GASGSSSSPSASASASAPAATSAAPAPSSFTTIAKQPATSSTEAPSTENTSTTS. 2 stretches are compositionally biased toward low complexity: residues 235–262 and 270–287; these read ASGS…APSS and PATS…STTS. N-linked (GlcNAc...) asparagine glycosylation occurs at N282. Residues 329-365 enclose the CBM1 domain; that stretch reads GAVKEWYQCGGLNYKGSTQCEEGLTCKKWNPYYYQCI.

It belongs to the polysaccharide monooxygenase AA9 family. Requires Cu(2+) as cofactor.

It is found in the secreted. It catalyses the reaction [(1-&gt;4)-beta-D-glucosyl]n+m + reduced acceptor + O2 = 4-dehydro-beta-D-glucosyl-[(1-&gt;4)-beta-D-glucosyl]n-1 + [(1-&gt;4)-beta-D-glucosyl]m + acceptor + H2O.. Its function is as follows. Lytic polysaccharide monooxygenase (LPMO) that depolymerizes crystalline and amorphous polysaccharides via the oxidation of scissile alpha- or beta-(1-4)-glycosidic bonds, yielding C4 oxidation products. Catalysis by LPMOs requires the reduction of the active-site copper from Cu(II) to Cu(I) by a reducing agent and H(2)O(2) or O(2) as a cosubstrate. Active on cellulose and cello-oligosaccharides, as well as plant cell wall-derived hemicellulosic polysaccharides. Also active on cello-oligosaccharides such as cellohexaose, cellopentaose or cellotetraose. The sequence is that of AA9 family lytic polysaccharide monooxygenase A from Aspergillus oryzae (strain ATCC 42149 / RIB 40) (Yellow koji mold).